A 381-amino-acid chain; its full sequence is Cytochrome b (381 aa).

The next 4 helical transmembrane spans lie at 34-54, 78-99, 114-134, and 179-199; these read FGSLLATCLALQIITGIFLAM, WLIRNMHANGASLFFMCIYLHI, WNTGIILLLLVMATAFVGYVL, and FFTFHFLLPFAITGLTAVHLL. Residues His-84 and His-98 each contribute to the heme b site. His-183 and His-197 together coordinate heme b. Position 202 (His-202) interacts with a ubiquinone. 4 helical membrane-spanning segments follow: residues 227 to 247, 289 to 309, 321 to 341, and 348 to 368; these read YKDLLGLILMLTFLLTLTLFS, LGGVLALLFSILILFLMPTLH, LTQILFWSLVADLLVLTWIGG, and FIIIGQVASTFYFLILLLLMP.

This sequence belongs to the cytochrome b family. The cytochrome bc1 complex contains 3 respiratory subunits (MT-CYB, CYC1 and UQCRFS1), 2 core proteins (UQCRC1 and UQCRC2) and probably 6 low-molecular weight proteins. Requires heme b as cofactor.

It localises to the mitochondrion inner membrane. Its function is as follows. Component of the ubiquinol-cytochrome c reductase complex (complex III or cytochrome b-c1 complex) that is part of the mitochondrial respiratory chain. The b-c1 complex mediates electron transfer from ubiquinol to cytochrome c. Contributes to the generation of a proton gradient across the mitochondrial membrane that is then used for ATP synthesis. The sequence is that of Cytochrome b (MT-CYB) from Chelonia mydas (Green sea-turtle).